The chain runs to 253 residues: tRNA (guanine-N(1)-)-methyltransferase (253 aa).

Residues glycine 110 and 130–135 contribute to the S-adenosyl-L-methionine site; that span reads IGDYIL.

This sequence belongs to the RNA methyltransferase TrmD family. In terms of assembly, homodimer.

It is found in the cytoplasm. It carries out the reaction guanosine(37) in tRNA + S-adenosyl-L-methionine = N(1)-methylguanosine(37) in tRNA + S-adenosyl-L-homocysteine + H(+). In terms of biological role, specifically methylates guanosine-37 in various tRNAs. This is tRNA (guanine-N(1)-)-methyltransferase from Carboxydothermus hydrogenoformans (strain ATCC BAA-161 / DSM 6008 / Z-2901).